Consider the following 172-residue polypeptide: Ribosome maturation factor RimM (172 aa).

Residues 96–168 form the PRC barrel domain; it reads DGEFYYHEII…RVDVEIPEGL (73 aa).

Belongs to the RimM family. Binds ribosomal protein uS19.

It is found in the cytoplasm. Its function is as follows. An accessory protein needed during the final step in the assembly of 30S ribosomal subunit, possibly for assembly of the head region. Essential for efficient processing of 16S rRNA. May be needed both before and after RbfA during the maturation of 16S rRNA. It has affinity for free ribosomal 30S subunits but not for 70S ribosomes. The polypeptide is Ribosome maturation factor RimM (Streptococcus sanguinis (strain SK36)).